A 242-amino-acid polypeptide reads, in one-letter code: Lactate utilization protein A 2 (242 aa).

It belongs to the LutA/YkgE family.

Functionally, is involved in L-lactate degradation and allows cells to grow with lactate as the sole carbon source. The chain is Lactate utilization protein A 2 from Bacillus cereus (strain AH820).